A 264-amino-acid polypeptide reads, in one-letter code: MSATHLPDTQNSADTRHIIIDKVGIKDIIHPITYIDCDGNKMPTIGMFTMTVSLPEHVKGTHMSRFIEILNENSCEFSAHNFDQIIDKVKEKLESDTAHITLNFPFFRKKEAPSSGVKSMMDYQVTLYGTLNKGEVQVMIKVVVPVTSLCPCSKSISKYGAHNQRSHITIKAKVSKGRTLHIEDLIDLAERKASCELYALLKRDDEKMVTERAYDNPAFVEDLVRDIAVDLNADDKISYYCLESENFESIHNHSAYALIENLKC.

It belongs to the GTP cyclohydrolase IV family.

The enzyme catalyses GTP + H2O = 7,8-dihydroneopterin 3'-triphosphate + formate + H(+). It functions in the pathway cofactor biosynthesis; 7,8-dihydroneopterin triphosphate biosynthesis; 7,8-dihydroneopterin triphosphate from GTP: step 1/1. Its function is as follows. Converts GTP to 7,8-dihydroneopterin triphosphate. The chain is GTP cyclohydrolase FolE2 from Vesicomyosocius okutanii subsp. Calyptogena okutanii (strain HA).